The primary structure comprises 170 residues: Probable chemoreceptor glutamine deamidase CheD (170 aa).

It belongs to the CheD family.

It carries out the reaction L-glutaminyl-[protein] + H2O = L-glutamyl-[protein] + NH4(+). Probably deamidates glutamine residues to glutamate on methyl-accepting chemotaxis receptors (MCPs), playing an important role in chemotaxis. This Maridesulfovibrio salexigens (strain ATCC 14822 / DSM 2638 / NCIMB 8403 / VKM B-1763) (Desulfovibrio salexigens) protein is Probable chemoreceptor glutamine deamidase CheD.